Reading from the N-terminus, the 1265-residue chain is Methionine synthase (1265 aa).

Residues 19 to 338 form the Hcy-binding domain; that stretch reads RDEINAILQK…DHIREIAEAV (320 aa). Positions 260, 323, and 324 each coordinate Zn(2+). The Pterin-binding domain maps to 371–632; sequence FVNIGERCNV…IHKELLQLCE (262 aa). (6S)-5,6,7,8-tetrahydrofolate contacts are provided by residues 382 to 384, aspartate 449, asparagine 470, aspartate 537, asparagine 579, arginine 585, and arginine 591; that span reads GSR. One can recognise a B12-binding N-terminal domain in the interval 662–759; it reads QTDEWRNGPV…FMEKEREETR (98 aa). Methylcob(III)alamin-binding positions include glutamate 709, 782 to 786, histidine 785, serine 830, threonine 834, and alanine 886; that span reads GDVHD. The B12-binding domain maps to 772 to 907; the sequence is QGTIVLATVK…DENLKDEYFE (136 aa). An AdoMet activation domain is found at 923–1265; the sequence is SLKERRYLPL…LGPILGYDTD (343 aa). S-adenosyl-L-methionine-binding positions include aspartate 974, arginine 1172, and 1227-1228; that span reads YF. Residue threonine 1264 is modified to Phosphothreonine.

The protein belongs to the vitamin-B12 dependent methionine synthase family. Monomer. Dimer. Forms a multiprotein complex with MMACHC, MMADHC and MTRR. Requires methylcob(III)alamin as cofactor. It depends on Zn(2+) as a cofactor. In terms of tissue distribution, widely expressed. Expressed at the highest levels in pancreas, heart, brain, skeletal muscle and placenta. Expressed at lower levels in lung, liver and kidney.

Its subcellular location is the cytoplasm. The enzyme catalyses (6S)-5-methyl-5,6,7,8-tetrahydrofolate + L-homocysteine = (6S)-5,6,7,8-tetrahydrofolate + L-methionine. The protein operates within amino-acid biosynthesis; L-methionine biosynthesis via de novo pathway; L-methionine from L-homocysteine (MetH route): step 1/1. In terms of biological role, catalyzes the transfer of a methyl group from methylcob(III)alamin (MeCbl) to homocysteine, yielding enzyme-bound cob(I)alamin and methionine in the cytosol. MeCbl is an active form of cobalamin (vitamin B12) used as a cofactor for methionine biosynthesis. Cob(I)alamin form is regenerated to MeCbl by a transfer of a methyl group from 5-methyltetrahydrofolate. The processing of cobalamin in the cytosol occurs in a multiprotein complex composed of at least MMACHC, MMADHC, MTRR (methionine synthase reductase) and MTR which may contribute to shuttle safely and efficiently cobalamin towards MTR in order to produce methionine. This is Methionine synthase from Homo sapiens (Human).